The chain runs to 269 residues: tRNA uridine(34) hydroxylase (269 aa).

The Rhodanese domain occupies 122–216; the sequence is QDPEVVLIDV…YLEAIAPEEN (95 aa). Cys-176 (cysteine persulfide intermediate) is an active-site residue.

The protein belongs to the TrhO family.

It catalyses the reaction uridine(34) in tRNA + AH2 + O2 = 5-hydroxyuridine(34) in tRNA + A + H2O. Its function is as follows. Catalyzes oxygen-dependent 5-hydroxyuridine (ho5U) modification at position 34 in tRNAs. The protein is tRNA uridine(34) hydroxylase of Synechococcus elongatus (strain ATCC 33912 / PCC 7942 / FACHB-805) (Anacystis nidulans R2).